We begin with the raw amino-acid sequence, 36 residues long: YCGLFGDLCTLDGTLACCIALELECIPLNDFVGICL.

Disulfide bonds link C2–C18, C9–C25, and C17–C35.

In terms of biological role, sialidase inhibitor. Competitively inhibits bacterial sialidases, but not viral sialidases. Does not inhibit glycosidases or proteases. Has no antitumor activity. This chain is Asteropin-A, found in Asteropus simplex (Marine sponge).